Reading from the N-terminus, the 469-residue chain is Ribulose bisphosphate carboxylase large chain (469 aa).

A propeptide spanning residues 1 to 2 (MS) is cleaved from the precursor. Proline 3 is modified (N-acetylproline). At lysine 14 the chain carries N6,N6,N6-trimethyllysine. Residues asparagine 123 and threonine 173 each contribute to the substrate site. The active-site Proton acceptor is lysine 175. Lysine 177 is a binding site for substrate. Residues lysine 201, aspartate 203, and glutamate 204 each contribute to the Mg(2+) site. N6-carboxylysine is present on lysine 201. Histidine 294 serves as the catalytic Proton acceptor. Positions 295, 327, and 379 each coordinate substrate.

Belongs to the RuBisCO large chain family. Type I subfamily. Heterohexadecamer of 8 large chains and 8 small chains; disulfide-linked. The disulfide link is formed within the large subunit homodimers. Mg(2+) serves as cofactor. In terms of processing, the disulfide bond which can form in the large chain dimeric partners within the hexadecamer appears to be associated with oxidative stress and protein turnover.

The protein resides in the plastid. The protein localises to the chloroplast. It catalyses the reaction 2 (2R)-3-phosphoglycerate + 2 H(+) = D-ribulose 1,5-bisphosphate + CO2 + H2O. The catalysed reaction is D-ribulose 1,5-bisphosphate + O2 = 2-phosphoglycolate + (2R)-3-phosphoglycerate + 2 H(+). Its function is as follows. RuBisCO catalyzes two reactions: the carboxylation of D-ribulose 1,5-bisphosphate, the primary event in carbon dioxide fixation, as well as the oxidative fragmentation of the pentose substrate in the photorespiration process. Both reactions occur simultaneously and in competition at the same active site. The sequence is that of Ribulose bisphosphate carboxylase large chain from Brexia madagascariensis.